The primary structure comprises 299 residues: MTQALTPTVSNTAQPDPARLLAPIVRQVGQAIGDYRMIEQGDRVMVCLSGGKDSYTLLDVLLHLQKKAPIDFEVVAVNLDQGQPGFPKDVLPRYLTALGVRHDILTEDTYSVVKEKTPEGKTTCSLCSRLRRGILYQHAREIGATKIALGHHREDILETLFMNMFFGARLKAMPPKLQSDDGTNVVIRPLAYVAEADIIRYAQAREFPVIPCNLCGAQPNLQRKVVGDMLEGWEREHPGRLNNILRSLTRVTPSHLLDRELYDFASLSVTPAQGDTGFDAESFPEREFMAGLSELSLLQ.

Residues 49–54 (SGGKDS) carry the PP-loop motif motif. Positions 124, 127, and 215 each coordinate [4Fe-4S] cluster.

Belongs to the TtcA family. In terms of assembly, homodimer. It depends on Mg(2+) as a cofactor. [4Fe-4S] cluster serves as cofactor.

It is found in the cytoplasm. It catalyses the reaction cytidine(32) in tRNA + S-sulfanyl-L-cysteinyl-[cysteine desulfurase] + AH2 + ATP = 2-thiocytidine(32) in tRNA + L-cysteinyl-[cysteine desulfurase] + A + AMP + diphosphate + H(+). It functions in the pathway tRNA modification. Catalyzes the ATP-dependent 2-thiolation of cytidine in position 32 of tRNA, to form 2-thiocytidine (s(2)C32). The sulfur atoms are provided by the cysteine/cysteine desulfurase (IscS) system. In Deinococcus radiodurans (strain ATCC 13939 / DSM 20539 / JCM 16871 / CCUG 27074 / LMG 4051 / NBRC 15346 / NCIMB 9279 / VKM B-1422 / R1), this protein is tRNA-cytidine(32) 2-sulfurtransferase.